The following is a 293-amino-acid chain: Shikimate dehydrogenase (NADP(+)) (293 aa).

Shikimate-binding positions include 26 to 28 (SKS) and Thr73. Residue Lys77 is the Proton acceptor of the active site. Asp89 lines the NADP(+) pocket. Asn98 and Asp113 together coordinate shikimate. Residues 137–141 (GAGGA), 161–166 (NRTKQR), and Ile231 contribute to the NADP(+) site. Position 233 (Tyr233) interacts with shikimate. Gly254 serves as a coordination point for NADP(+).

This sequence belongs to the shikimate dehydrogenase family. Homodimer.

It carries out the reaction shikimate + NADP(+) = 3-dehydroshikimate + NADPH + H(+). It functions in the pathway metabolic intermediate biosynthesis; chorismate biosynthesis; chorismate from D-erythrose 4-phosphate and phosphoenolpyruvate: step 4/7. Functionally, involved in the biosynthesis of the chorismate, which leads to the biosynthesis of aromatic amino acids. Catalyzes the reversible NADPH linked reduction of 3-dehydroshikimate (DHSA) to yield shikimate (SA). The protein is Shikimate dehydrogenase (NADP(+)) of Bartonella henselae (strain ATCC 49882 / DSM 28221 / CCUG 30454 / Houston 1) (Rochalimaea henselae).